We begin with the raw amino-acid sequence, 633 residues long: Breast carcinoma-amplified sequence 1 homolog (633 aa).

Disordered regions lie at residues Met1–Asn34 and Ser57–Trp422. 2 stretches are compositionally biased toward polar residues: residues Lys24–Asn34 and Ser57–Lys68. Phosphoserine is present on Ser127. The span at Val278 to Met288 shows a compositional bias: polar residues. The segment covering Thr300 to Cys318 has biased composition (basic and acidic residues). Ser328 is subject to Phosphoserine. The residue at position 330 (Thr330) is a Phosphothreonine. Residues Asn359 to Glu378 are compositionally biased toward polar residues. A Phosphoserine modification is found at Ser360. Basic and acidic residues predominate over residues Ser400 to Ala410. Residues Ser425 and Ser443 each carry the phosphoserine modification. The segment at Glu454–Lys633 is disordered. Residues Thr471–Pro481 show a composition bias toward basic and acidic residues. The span at Lys510 to Lys522 shows a compositional bias: polar residues. At Thr523 the chain carries Phosphothreonine. Ser525 carries the post-translational modification Phosphoserine. Residues Lys537–Ala555 show a composition bias toward basic and acidic residues. Phosphoserine is present on residues Ser601 and Ser615. The interacts with DYNLL1 AND DYNLL2 stretch occupies residues Met614–Lys633.

In terms of assembly, homodimer. Interacts with DYNLL1 and DYNLL2. As to expression, highly expressed in the brain and, more specifically, in oligodendrocytes. Expressed in the Schwann cells (at protein level).

Its subcellular location is the cytoplasm. In terms of biological role, required for myelination. This chain is Breast carcinoma-amplified sequence 1 homolog (Bcas1), found in Mus musculus (Mouse).